We begin with the raw amino-acid sequence, 427 residues long: Dihydroorotase (427 aa).

Residues His58 and His60 each contribute to the Zn(2+) site. Substrate contacts are provided by residues His60–Arg62 and Asn92. Zn(2+)-binding residues include Asp150, His177, and His230. Position 276 (Asn276) interacts with substrate. Asp303 lines the Zn(2+) pocket. The active site involves Asp303. Substrate contacts are provided by residues His307 and Phe321–Gly322.

The protein belongs to the metallo-dependent hydrolases superfamily. DHOase family. Class I DHOase subfamily. Requires Zn(2+) as cofactor.

It carries out the reaction (S)-dihydroorotate + H2O = N-carbamoyl-L-aspartate + H(+). It participates in pyrimidine metabolism; UMP biosynthesis via de novo pathway; (S)-dihydroorotate from bicarbonate: step 3/3. Its function is as follows. Catalyzes the reversible cyclization of carbamoyl aspartate to dihydroorotate. The chain is Dihydroorotase from Lactobacillus leichmannii.